The following is a 214-amino-acid chain: Probable transaldolase (214 aa).

K83 acts as the Schiff-base intermediate with substrate in catalysis.

This sequence belongs to the transaldolase family. Type 3B subfamily.

The protein localises to the cytoplasm. It catalyses the reaction D-sedoheptulose 7-phosphate + D-glyceraldehyde 3-phosphate = D-erythrose 4-phosphate + beta-D-fructose 6-phosphate. It functions in the pathway carbohydrate degradation; pentose phosphate pathway; D-glyceraldehyde 3-phosphate and beta-D-fructose 6-phosphate from D-ribose 5-phosphate and D-xylulose 5-phosphate (non-oxidative stage): step 2/3. Transaldolase is important for the balance of metabolites in the pentose-phosphate pathway. This is Probable transaldolase from Brevibacillus brevis (strain 47 / JCM 6285 / NBRC 100599).